We begin with the raw amino-acid sequence, 448 residues long: N-succinylarginine dihydrolase (448 aa).

Residues Gly19–Ser28, Asn110, and His137–Arg138 contribute to the substrate site. Glu174 is a catalytic residue. Arg214 is a binding site for substrate. His250 is a catalytic residue. Asp252 and Asn365 together coordinate substrate. The Nucleophile role is filled by Cys371.

Belongs to the succinylarginine dihydrolase family. As to quaternary structure, homodimer.

It catalyses the reaction N(2)-succinyl-L-arginine + 2 H2O + 2 H(+) = N(2)-succinyl-L-ornithine + 2 NH4(+) + CO2. It functions in the pathway amino-acid degradation; L-arginine degradation via AST pathway; L-glutamate and succinate from L-arginine: step 2/5. Catalyzes the hydrolysis of N(2)-succinylarginine into N(2)-succinylornithine, ammonia and CO(2). This is N-succinylarginine dihydrolase from Pseudomonas aeruginosa (strain UCBPP-PA14).